The chain runs to 282 residues: 4-hydroxy-tetrahydrodipicolinate reductase (282 aa).

NAD(+)-binding positions include 14-19 and 115-117; these read GAMGRM and GTT. H171 (proton donor/acceptor) is an active-site residue. (S)-2,3,4,5-tetrahydrodipicolinate is bound at residue H172. Residue K175 is the Proton donor of the active site. 181–182 is a (S)-2,3,4,5-tetrahydrodipicolinate binding site; that stretch reads GT.

It belongs to the DapB family.

It is found in the cytoplasm. The enzyme catalyses (S)-2,3,4,5-tetrahydrodipicolinate + NAD(+) + H2O = (2S,4S)-4-hydroxy-2,3,4,5-tetrahydrodipicolinate + NADH + H(+). It catalyses the reaction (S)-2,3,4,5-tetrahydrodipicolinate + NADP(+) + H2O = (2S,4S)-4-hydroxy-2,3,4,5-tetrahydrodipicolinate + NADPH + H(+). The protein operates within amino-acid biosynthesis; L-lysine biosynthesis via DAP pathway; (S)-tetrahydrodipicolinate from L-aspartate: step 4/4. Catalyzes the conversion of 4-hydroxy-tetrahydrodipicolinate (HTPA) to tetrahydrodipicolinate. This Prochlorococcus marinus (strain NATL2A) protein is 4-hydroxy-tetrahydrodipicolinate reductase.